Consider the following 106-residue polypeptide: Iron-sulfur cluster assembly protein CyaY (106 aa).

Belongs to the frataxin family.

In terms of biological role, involved in iron-sulfur (Fe-S) cluster assembly. May act as a regulator of Fe-S biogenesis. This chain is Iron-sulfur cluster assembly protein CyaY, found in Salmonella agona (strain SL483).